The sequence spans 458 residues: UDP-N-acetylmuramate--L-alanine ligase (458 aa).

ATP is bound at residue 112 to 118 (GMHGKTT).

The protein belongs to the MurCDEF family.

It is found in the cytoplasm. The enzyme catalyses UDP-N-acetyl-alpha-D-muramate + L-alanine + ATP = UDP-N-acetyl-alpha-D-muramoyl-L-alanine + ADP + phosphate + H(+). Its pathway is cell wall biogenesis; peptidoglycan biosynthesis. In terms of biological role, cell wall formation. This is UDP-N-acetylmuramate--L-alanine ligase from Acidobacterium capsulatum (strain ATCC 51196 / DSM 11244 / BCRC 80197 / JCM 7670 / NBRC 15755 / NCIMB 13165 / 161).